A 426-amino-acid polypeptide reads, in one-letter code: F-box protein At2g15640 (426 aa).

The 48-residue stretch at 1–48 (MNPSTITNDLTVEILSRLPAKSVARFHCVSKQWGSIFGSPYFKELFLT) folds into the F-box domain.

This Arabidopsis thaliana (Mouse-ear cress) protein is F-box protein At2g15640.